The primary structure comprises 240 residues: tRNA pseudouridine synthase B (240 aa).

The active-site Nucleophile is the Asp-54.

The protein belongs to the pseudouridine synthase TruB family. Type 1 subfamily.

The enzyme catalyses uridine(55) in tRNA = pseudouridine(55) in tRNA. In terms of biological role, responsible for synthesis of pseudouridine from uracil-55 in the psi GC loop of transfer RNAs. This Chlorobium phaeovibrioides (strain DSM 265 / 1930) (Prosthecochloris vibrioformis (strain DSM 265)) protein is tRNA pseudouridine synthase B.